The following is a 576-amino-acid chain: F-actin capping regulator BSP1 (576 aa).

Residues 24–50 (RYSNIPSSKPAGEALSPVRSHNSGEYR) form a disordered region. Phosphoserine occurs at positions 46, 79, and 88. Disordered regions lie at residues 132 to 160 (NDSN…PREK) and 173 to 316 (GRAD…KRIP). Phosphoserine is present on Ser185. Over residues 191–206 (TRRDHIKITDGNEEKP) the composition is skewed to basic and acidic residues. Ser220 is subject to Phosphoserine. Composition is skewed to polar residues over residues 243–255 (SRST…LSSL) and 264–279 (KSYN…TVKS). Residues 304-313 (KPTPPSPPAK) show a composition bias toward pro residues. A phosphoserine mark is found at Ser309 and Ser320. An interaction with F-actin region spans residues 408–470 (SIPEAIKGIQ…LSLRNNLKKR (63 aa)). The interval 541 to 576 (DKYTTSRDETVKETKPLVHPNKNRTRGPRRKLPTRV) is disordered. Residues 544-556 (TTSRDETVKETKP) are compositionally biased toward basic and acidic residues. The interval 547-576 (RDETVKETKPLVHPNKNRTRGPRRKLPTRV) is interaction with the F-actin capping complex. The span at 561–576 (NKNRTRGPRRKLPTRV) shows a compositional bias: basic residues.

As to quaternary structure, interacts (via C-terminus) with the CAP1-CAP2 F-actin capping protein complex. Interacts with INP52 (via SAC domain); the interaction is direct. Interacts with INP53 (via SAC domain); the interaction is direct. Interacts with RVS167. Interacts with SLA1. Post-translationally, phosphorylated by CDC28.

It is found in the cytoplasm. Its subcellular location is the cytoskeleton. It localises to the actin patch. The protein resides in the cell membrane. Recruits the capping protein complex to actin patches and the actomyosin contractile ring, and/or stabilizes their interaction. May serve as an adapter to link INP52 and INP53 to the cortical actin cytoskeleton. Binds F-actin. The sequence is that of F-actin capping regulator BSP1 (BSP1) from Saccharomyces cerevisiae (strain ATCC 204508 / S288c) (Baker's yeast).